Reading from the N-terminus, the 105-residue chain is Insulin (105 aa).

An N-terminal signal peptide occupies residues 1-22 (MAFWLQAASLLVLLALSPGVDA). 3 cysteine pairs are disulfide-bonded: C29–C91, C41–C104, and C90–C95. The propeptide at 53-82 (DVDPLIGFLSPKSAKENEEYPFKDQTEMMV) is c peptide.

Belongs to the insulin family. As to quaternary structure, heterodimer of a B chain and an A chain linked by two disulfide bonds.

It localises to the secreted. Functionally, insulin decreases blood glucose concentration. It increases cell permeability to monosaccharides, amino acids and fatty acids. It accelerates glycolysis, the pentose phosphate cycle, and glycogen synthesis in liver. The protein is Insulin (ins) of Oncorhynchus keta (Chum salmon).